Here is a 310-residue protein sequence, read N- to C-terminus: Beta sliding clamp (310 aa).

It belongs to the beta sliding clamp family. In terms of assembly, forms a ring-shaped head-to-tail homodimer around DNA which binds and tethers DNA polymerases and other proteins to the DNA. The DNA replisome complex has a single clamp-loading complex (3 tau and 1 each of delta, delta', psi and chi subunits) which binds 3 Pol III cores (1 core on the leading strand and 2 on the lagging strand) each with a beta sliding clamp dimer. Additional proteins in the replisome are other copies of gamma, psi and chi, Ssb, DNA helicase and RNA primase.

The protein resides in the cytoplasm. Functionally, confers DNA tethering and processivity to DNA polymerases and other proteins. Acts as a clamp, forming a ring around DNA (a reaction catalyzed by the clamp-loading complex) which diffuses in an ATP-independent manner freely and bidirectionally along dsDNA. Initially characterized for its ability to contact the catalytic subunit of DNA polymerase III (Pol III), a complex, multichain enzyme responsible for most of the replicative synthesis in bacteria; Pol III exhibits 3'-5' exonuclease proofreading activity. The beta chain is required for initiation of replication as well as for processivity of DNA replication. This is Beta sliding clamp (dnaN) from Micrococcus luteus (Micrococcus lysodeikticus).